Here is a 493-residue protein sequence, read N- to C-terminus: MENLEQTCASLRAQIAATEAQLAGLKRELEIAEQAAEVKAQSTTRTITAEDGKTNETREWPLLSEEYKRYGRQMIVPQLGLQGQLKLRAARVLIVGAGGLGCPAALYLAGAGVGTLGLVDGDTVENSNLHRQVLHRSKNVGTFKVDSAIEYLRELNPHPTYVPYRAHLTPQEAPGIFKDYDIVLDCTDNPATRYLISDTAVLLGKPLVSASALRTEGQLMVLNYPPRPVGDKSGGPCYRCVFPKPPPANSVVSCADGGILGPVVGTMGVLQALEAIKVITSPAVNPSASPPSLLIFSAYSTPLFRTIRLRARRANCAVCSADASVTLETLKNGSTDYVFFCGVAGLEATLSPEERISPLEFKKRHPKEVPQDGGRINKEPTIIDVREKVQFDICSLENSINIPISTILSSASSPTNVDANAQPSLPFWLPRELASADSTDPIYVVCRHGNDSQIAVRRLKELGLDRGGQRYVGDIQGGLRAWREQIDPDWPEY.

Residues G99, D120, 127 to 131 (SNLHR), K144, and 188 to 189 (DN) contribute to the ATP site. Positions 237 and 240 each coordinate Zn(2+). Catalysis depends on C254, which acts as the Glycyl thioester intermediate; for adenylyltransferase activity. 2 residues coordinate Zn(2+): C316 and C319. The 116-residue stretch at 376-491 (INKEPTIIDV…WREQIDPDWP (116 aa)) folds into the Rhodanese domain. The active-site Cysteine persulfide intermediate; for sulfurtransferase activity is C446.

In the N-terminal section; belongs to the HesA/MoeB/ThiF family. UBA4 subfamily. Requires Zn(2+) as cofactor.

The protein localises to the cytoplasm. It is found in the cytosol. The catalysed reaction is [molybdopterin-synthase sulfur-carrier protein]-C-terminal Gly-Gly + ATP + H(+) = [molybdopterin-synthase sulfur-carrier protein]-C-terminal Gly-Gly-AMP + diphosphate. The enzyme catalyses [molybdopterin-synthase sulfur-carrier protein]-C-terminal Gly-Gly-AMP + S-sulfanyl-L-cysteinyl-[cysteine desulfurase] + AH2 = [molybdopterin-synthase sulfur-carrier protein]-C-terminal-Gly-aminoethanethioate + L-cysteinyl-[cysteine desulfurase] + A + AMP + 2 H(+). Its pathway is tRNA modification; 5-methoxycarbonylmethyl-2-thiouridine-tRNA biosynthesis. It participates in cofactor biosynthesis; molybdopterin biosynthesis. Functionally, plays a central role in 2-thiolation of mcm(5)S(2)U at tRNA wobble positions of cytosolic tRNA(Lys), tRNA(Glu) and tRNA(Gln). Also essential during biosynthesis of the molybdenum cofactor. Acts by mediating the C-terminal thiocarboxylation of sulfur carriers urm1 and mocs2a. Its N-terminus first activates urm1 and mocs2a as acyl-adenylates (-COAMP), then the persulfide sulfur on the catalytic cysteine is transferred to urm1 and mocs2a to form thiocarboxylation (-COSH) of their C-terminus. The reaction probably involves hydrogen sulfide that is generated from the persulfide intermediate and that acts as a nucleophile towards urm1 and mocs2a. Subsequently, a transient disulfide bond is formed. Does not use thiosulfate as sulfur donor; nfs1 probably acting as a sulfur donor for thiocarboxylation reactions. The polypeptide is Adenylyltransferase and sulfurtransferase uba4 (Aspergillus fumigatus (strain ATCC MYA-4609 / CBS 101355 / FGSC A1100 / Af293) (Neosartorya fumigata)).